The following is a 442-amino-acid chain: MKLYALFSLLVGSLAIGQISAAGSHHLLCYYDGNSFVREGLSKLILTDLEPALQYCTHLVYGYAGINPSSNKLVSNNEKLDLDLGSSLFRQVTGLKRKYPALKVLLSVGGDKDTVDPENNKYLTLLESSNARIPFINSAHSLVKTYGFDGLDLGWQFPKNKPKKVHGSIGKFWKGFKKIFSGDHVVDEKAEEHKEAFTALVRELKNAFRPDGYILGLSVLPNVNSSLFFDVPAIINNLDYVNLHTYDFQTPERNNEVADFPAPIYELNERNPEFNVNYQVKYWTGNRAPAAKINVGIATYGRAWKLTKDSGLTGLPPVAEADGVAPAGTQTQIPGLLSWPEVCAKLPNPANQHLKGADGPLRKVGDPTKRFGSYAYRSADDSGENGVWVGYEDPDTAAIKAEYVKREGLGGIAVVDLSFDDFRGGCTGHDKFPILRQVKSKL.

The signal sequence occupies residues 1 to 21 (MKLYALFSLLVGSLAIGQISA). The 418-residue stretch at 25-442 (HHLLCYYDGN…PILRQVKSKL (418 aa)) folds into the GH18 domain. Cysteines 29 and 56 form a disulfide. Asn224 carries an N-linked (GlcNAc...) asparagine glycan. Cys343 and Cys426 are disulfide-bonded.

Belongs to the glycosyl hydrolase 18 family. IDGF subfamily. Post-translationally, glycosylated. Primarily expressed in yolk cells and fat body. In larvae, it is expressed in the imaginal ring, the salivary duct, large salivary gland cells and weakly expressed in imaginal disks. More strongly expressed than Idgf1 and Idgf3.

The protein resides in the secreted. Its function is as follows. Cooperates with insulin-like peptides to stimulate the proliferation, polarization and motility of imaginal disk cells. May act by stabilizing the binding of insulin-like peptides to its receptor through a simultaneous interaction with both molecules to form a multiprotein signaling complex. This chain is Chitinase-like protein Idgf4 (Idgf4), found in Drosophila melanogaster (Fruit fly).